The following is a 425-amino-acid chain: Serine--tRNA ligase (425 aa).

L-serine is bound at residue 228–230 (TAE). 259 to 261 (RSE) provides a ligand contact to ATP. Glutamate 282 contributes to the L-serine binding site. 346–349 (EIAS) is a binding site for ATP. Serine 382 is a binding site for L-serine.

Belongs to the class-II aminoacyl-tRNA synthetase family. Type-1 seryl-tRNA synthetase subfamily. In terms of assembly, homodimer. The tRNA molecule binds across the dimer.

The protein localises to the cytoplasm. It catalyses the reaction tRNA(Ser) + L-serine + ATP = L-seryl-tRNA(Ser) + AMP + diphosphate + H(+). The catalysed reaction is tRNA(Sec) + L-serine + ATP = L-seryl-tRNA(Sec) + AMP + diphosphate + H(+). It functions in the pathway aminoacyl-tRNA biosynthesis; selenocysteinyl-tRNA(Sec) biosynthesis; L-seryl-tRNA(Sec) from L-serine and tRNA(Sec): step 1/1. In terms of biological role, catalyzes the attachment of serine to tRNA(Ser). Is also able to aminoacylate tRNA(Sec) with serine, to form the misacylated tRNA L-seryl-tRNA(Sec), which will be further converted into selenocysteinyl-tRNA(Sec). This Rickettsia canadensis (strain McKiel) protein is Serine--tRNA ligase.